The chain runs to 550 residues: Forkhead box protein N4 (550 aa).

Positions 231 to 327 (KPIYSYSCLI…EEMQKWKRKD (97 aa)) form a DNA-binding region, fork-head. A compositionally biased stretch (low complexity) spans 402–411 (LQNQSRLAPS). A disordered region spans residues 402–437 (LQNQSRLAPSSPAPAQTPPLHTVPDMTNSSLPQHPA).

Isoform 1 is expressed mainly in adult thymus. Isoform 2 is detected in adult skin. Isoform 3 is expressed in adult brain and embryo. Prominent expression sites include the olfactory placode, the basal layer of the olfactory epithelium, the neuroepithelium of the developing retina, the germinal zone of the differentiated eye, regions of motoneuron development in the neural tube and periventricular regions of the brain.

The protein localises to the nucleus. Functionally, transcription factor essential for neural and some non-neural tissues development. Binds to an 11-bp consensus sequence containing the invariant tetranucleotide 5'-ACGC-3'. During development of the central nervous system, required to specify the amacrine and horizontal cell fates from multipotent retinal progenitors while suppressing the alternative photoreceptor cell fates. Drives commitment of p2 progenitors to the V2b interneuron fates during spinal cord neurogenesis. In development of non-neural tissues, plays an essential role in the specification of the atrioventricular canal. The chain is Forkhead box protein N4 (foxn4) from Danio rerio (Zebrafish).